A 1216-amino-acid chain; its full sequence is MAGAQPGVHALQLKPVCVSDSLKKGTKFVKWDDDSTIVTPIILRTDPQGFFFYWTDQNKETELLDLSLVKDARCGKHAKAPKDPKLRELLDVGNIGHLEQRMITVVYGPDLVNISHLNLVAFQEEVAKEWTNEVFSLATNLLAQNMSRDAFLEKAYTKLKLQVTPEGRIPLKNIYRLFSADRKRVETALEACSLPSSRNDSIPQEDFTPDVYRVFLNNLCPRPEIDNIFSEFGAKSKPYLTVDQMMDFINLKQRDPRLNEILYPPLKQEQVQVLIEKYEPNSSLAKKGQMSVDGFMRYLSGEENGVVSPEKLDLNEDMSQPLSHYFINSSHNTYLTAGQLAGNSSVEMYRQVLLSGCRCVELDCWKGRTAEEEPVITHGFTMTTEISFKEVIEAIAECAFKTSPFPILLSFENHVDSPKQQAKMAEYCRLIFGDALLMEPLEKYPLESGVPLPSPMDLMYKILVKNKKKSHKSSEGSGKKKLSEQASNTYSDSSSVFEPSSPGAGEADTESDDDDDDDDCKKSSMDEGTAGSEAMATEEMSNLVNYIQPVKFESFEISKKRNKSFEMSSFVETKGLEQLTKSPVEFVEYNKMQLSRIYPKGTRVDSSNYMPQLFWNAGCQMVALNFQTVDLAMQINMGMYEYNGKSGYRLKPEFMRRPDKHFDPFTEGIVDGIVANTLSVKIISGQFLSDKKVGTYVEVDMFGLPVDTRRKAFKTKTSQGNAVNPVWEEEPIVFKKVVLPSLACLRIAAYEEGGKFIGHRILPVQAIRPGYHYICLRNERNQPLTLPAVFVYIEVKDYVPDTYADVIEALSNPIRYVNLMEQRAKQLAALTLEDEEEVKKEADPGETSSEAPSETRTTPAENGVNHTASLAPKPPSQAPHSQPAPGSVKAPAKTEDLIQSVLTEVEAQTIEELKQQKSFVKLQKKHYKEMKDLVKRHHKKTTELIKEHTTKYNEIQNDYLRRRAALEKSAKKDSKKKSEPSSPDHGSSAIEQDLAALDAEMTQKLIDLKDKQQQQLLNLRQEQYYSEKYQKREHIKLLIQKLTDVAEECQNNQLKKLKEICEKEKKELKKKMDKKRQEKITEAKSKDKSQMEEEKTEMIRSYIQEVVQYIKRLEEAQSKRQEKLVEKHNEIRQQILDEKPKLQTELEQEYQDKFKRLPLEILEFVQEAMKGKISEDSNHGSAPPSLASDAAKVNLKSPSSEEIERENPGREFDTPL.

Cysteine 17 carries the S-palmitoyl cysteine lipid modification. A Phosphoserine modification is found at serine 236. Residues glutamate 316–lysine 467 enclose the PI-PLC X-box domain. Active-site residues include histidine 331 and histidine 378. Phosphoserine is present on serine 417. The tract at residues lysine 469 to alanine 534 is disordered. Residues lysine 472–serine 483 show a composition bias toward basic and acidic residues. Residues serine 491–serine 501 show a composition bias toward low complexity. Over residues alanine 507 to aspartate 518 the composition is skewed to acidic residues. Threonine 509 carries the post-translational modification Phosphothreonine. 2 positions are modified to phosphoserine: serine 511 and serine 582. Positions methionine 540–arginine 656 constitute a PI-PLC Y-box domain. The region spanning arginine 656–leucine 786 is the C2 domain. 4 disordered regions span residues aspartate 834–proline 891, glutamate 967–alanine 989, methionine 1072–lysine 1095, and isoleucine 1173–leucine 1216. Residues glutamate 846–alanine 868 show a composition bias toward polar residues. Position 887 is a phosphoserine; by PKC (serine 887). Positions glutamate 967–glutamate 979 are enriched in basic and acidic residues. Phosphoserine is present on residues serine 978 and serine 987. The segment covering lysine 1075–lysine 1095 has biased composition (basic and acidic residues). Residues serine 1197, serine 1199, and serine 1200 each carry the phosphoserine modification. The span at arginine 1205 to leucine 1216 shows a compositional bias: basic and acidic residues.

In terms of assembly, interacts with DGKQ. Ca(2+) serves as cofactor. Palmitoylated. Palmitoylation at Cys-17 by ZDHHC21 regulates the signaling activity of PLCB1 and the function of the endothelial barrier. Palmitoylation by ZDHHC21 is stimulated by inflammation.

The protein resides in the nucleus membrane. It localises to the cytoplasm. The catalysed reaction is a 1,2-diacyl-sn-glycero-3-phospho-(1D-myo-inositol-4,5-bisphosphate) + H2O = 1D-myo-inositol 1,4,5-trisphosphate + a 1,2-diacyl-sn-glycerol + H(+). It carries out the reaction a 1,2-diacyl-sn-glycero-3-phospho-(1D-myo-inositol) + H2O = 1D-myo-inositol 1-phosphate + a 1,2-diacyl-sn-glycerol + H(+). In terms of biological role, catalyzes the hydrolysis of 1-phosphatidylinositol 4,5-bisphosphate into diacylglycerol (DAG) and inositol 1,4,5-trisphosphate (IP3) and mediates intracellular signaling downstream of G protein-coupled receptors. Regulates the function of the endothelial barrier. The chain is 1-phosphatidylinositol 4,5-bisphosphate phosphodiesterase beta-1 from Mus musculus (Mouse).